Reading from the N-terminus, the 116-residue chain is Putative BPES syndrome breakpoint region protein (116 aa).

Seems to be expressed only in testis.

In Homo sapiens (Human), this protein is Putative BPES syndrome breakpoint region protein (BPESC1).